We begin with the raw amino-acid sequence, 135 residues long: ATP synthase epsilon chain, chloroplastic (135 aa).

Belongs to the ATPase epsilon chain family. In terms of assembly, F-type ATPases have 2 components, CF(1) - the catalytic core - and CF(0) - the membrane proton channel. CF(1) has five subunits: alpha(3), beta(3), gamma(1), delta(1), epsilon(1). CF(0) has three main subunits: a, b and c.

The protein localises to the plastid. Its subcellular location is the chloroplast thylakoid membrane. Its function is as follows. Produces ATP from ADP in the presence of a proton gradient across the membrane. The sequence is that of ATP synthase epsilon chain, chloroplastic from Euglena gracilis.